Here is a 363-residue protein sequence, read N- to C-terminus: Putative F-box protein At4g22170 (363 aa).

Residues 7 to 58 (PNSWSDLPHDLLNLVFERLSFANFNRARSVCSSWYSASRQSVPKNQIHWLIL) form the F-box domain.

The protein is Putative F-box protein At4g22170 of Arabidopsis thaliana (Mouse-ear cress).